A 123-amino-acid chain; its full sequence is Small ribosomal subunit protein uS12 (123 aa).

A disordered region spans residues 1 to 25 (MPTINQLIRKRRKSSLARKKSPALQ). Residues 8-21 (IRKRRKSSLARKKS) show a composition bias toward basic residues. Asp89 carries the 3-methylthioaspartic acid modification.

Belongs to the universal ribosomal protein uS12 family. As to quaternary structure, part of the 30S ribosomal subunit. Contacts proteins S8 and S17. May interact with IF1 in the 30S initiation complex.

Functionally, with S4 and S5 plays an important role in translational accuracy. Its function is as follows. Interacts with and stabilizes bases of the 16S rRNA that are involved in tRNA selection in the A site and with the mRNA backbone. Located at the interface of the 30S and 50S subunits, it traverses the body of the 30S subunit contacting proteins on the other side and probably holding the rRNA structure together. The combined cluster of proteins S8, S12 and S17 appears to hold together the shoulder and platform of the 30S subunit. This Chlamydia pneumoniae (Chlamydophila pneumoniae) protein is Small ribosomal subunit protein uS12.